The sequence spans 228 residues: L-ribulose-5-phosphate 4-epimerase UlaF (228 aa).

Substrate is bound by residues 26-27, 43-44, and 72-73; these read GN, SG, and SS. Residues Asp74, His93, and His95 each coordinate Zn(2+). Asp118 acts as the Proton donor/acceptor in catalysis. His167 contacts Zn(2+). Tyr225 serves as the catalytic Proton donor/acceptor.

The protein belongs to the aldolase class II family. AraD/FucA subfamily. Zn(2+) is required as a cofactor.

The enzyme catalyses L-ribulose 5-phosphate = D-xylulose 5-phosphate. Its pathway is cofactor degradation; L-ascorbate degradation; D-xylulose 5-phosphate from L-ascorbate: step 4/4. Catalyzes the isomerization of L-ribulose 5-phosphate to D-xylulose 5-phosphate. Is involved in the anaerobic L-ascorbate utilization. The polypeptide is L-ribulose-5-phosphate 4-epimerase UlaF (Escherichia coli O17:K52:H18 (strain UMN026 / ExPEC)).